Reading from the N-terminus, the 412-residue chain is Argininosuccinate synthase (412 aa).

ATP is bound by residues 15–23 (AYSGGLDTS) and alanine 42. L-citrulline contacts are provided by tyrosine 93 and serine 98. An ATP-binding site is contributed by glycine 123. Positions 125, 129, and 130 each coordinate L-aspartate. Asparagine 129 contacts L-citrulline. Positions 133, 185, 194, 270, and 282 each coordinate L-citrulline.

The protein belongs to the argininosuccinate synthase family. Type 1 subfamily. Homotetramer.

Its subcellular location is the cytoplasm. It carries out the reaction L-citrulline + L-aspartate + ATP = 2-(N(omega)-L-arginino)succinate + AMP + diphosphate + H(+). The protein operates within amino-acid biosynthesis; L-arginine biosynthesis; L-arginine from L-ornithine and carbamoyl phosphate: step 2/3. This chain is Argininosuccinate synthase, found in Psychrobacter arcticus (strain DSM 17307 / VKM B-2377 / 273-4).